Consider the following 282-residue polypeptide: DNA-binding transcriptional repressor YiaJ (282 aa).

A compositionally biased stretch (basic and acidic residues) spans 1-20 (MGKEVMGKKENEMAQEKERP). Residues 1-21 (MGKEVMGKKENEMAQEKERPA) form a disordered region. In terms of domain architecture, HTH iclR-type spans 23–85 (SQSLFRGLML…PAAGSYRLTT (63 aa)). Residues 45–64 (LAHLSELAGLNKSTVHRLLQ) constitute a DNA-binding region (H-T-H motif). Residues 100–272 (IIHIAAPHLE…AQAISNELGF (173 aa)) form the IclR-ED domain.

Its function is as follows. Negatively controls the transcription of the yiaKLMNOPQRS operon, which may be involved in the utilization of 2,3-diketo-L-gulonate. This Escherichia coli (strain K12) protein is DNA-binding transcriptional repressor YiaJ (yiaJ).